We begin with the raw amino-acid sequence, 271 residues long: Putative two-component membrane permease complex subunit SMU_746c (271 aa).

The next 2 helical transmembrane spans lie at 34 to 54 and 70 to 90; these read LAYI…TIWM and FFSP…PTVP.

Belongs to the UPF0703 family. As to quaternary structure, interacts with SMU_747c.

It localises to the cell membrane. In terms of biological role, could be part of a two-component membrane permease system responsible for amino acid transport under low pH. Involved in acidogenesis, biofilm formation and low-pH survival. The chain is Putative two-component membrane permease complex subunit SMU_746c from Streptococcus mutans serotype c (strain ATCC 700610 / UA159).